Here is a 609-residue protein sequence, read N- to C-terminus: Kelch-like protein 20 (609 aa).

A BTB domain is found at 68 to 135 (CDVVLVVGAK…AYTSQITVEE (68 aa)). The 103-residue stretch at 170-272 (CLGIRAFADT…SPKFLVGTVG (103 aa)) folds into the BACK domain. 6 Kelch repeats span residues 319-365 (VLFA…VLDD), 367-413 (LYAV…VLGG), 414-460 (FLYA…VLGG), 462-507 (LYAV…VYQD), 509-554 (IYAV…VVNG), and 556-601 (LMAV…VIKM).

As to quaternary structure, component of the BCR(KLHL20) E3 ubiquitin ligase complex, at least composed of CUL3, KLHL20 and RBX1. Interacts with PDZ-RhoGEF/ARHGEF11, DAPK1, PML and CORO7. Interacts with F-actin. Interacts with IFN-gamma (IFNG). Interacts (via kelch repeats) with IVNS1ABP (via kelch repeats); this interaction blocks the assembly of CUL3-KLHL20 complex.

The protein resides in the cytoplasm. It localises to the perinuclear region. The protein localises to the nucleus. It is found in the golgi apparatus. Its subcellular location is the trans-Golgi network. The protein resides in the cell projection. It localises to the axon. The protein localises to the dendrite. The protein operates within protein modification; protein ubiquitination. In terms of biological role, substrate-specific adapter of a BCR (BTB-CUL3-RBX1) E3 ubiquitin-protein ligase complex involved in interferon response and anterograde Golgi to endosome transport. The BCR(KLHL20) E3 ubiquitin ligase complex mediates the ubiquitination of DAPK1, leading to its degradation by the proteasome, thereby acting as a negative regulator of apoptosis. The BCR(KLHL20) E3 ubiquitin ligase complex also specifically mediates 'Lys-33'-linked ubiquitination. Involved in anterograde Golgi to endosome transport by mediating 'Lys-33'-linked ubiquitination of CORO7, promoting interaction between CORO7 and EPS15, thereby facilitating actin polymerization and post-Golgi trafficking. Also acts as a regulator of endothelial migration during angiogenesis by controlling the activation of Rho GTPases. The BCR(KLHL20) E3 ubiquitin ligase complex acts as a regulator of neurite outgrowth by mediating ubiquitination and degradation of PDZ-RhoGEF/ARHGEF11. This chain is Kelch-like protein 20 (KLHL20), found in Bos taurus (Bovine).